A 334-amino-acid polypeptide reads, in one-letter code: NAD-dependent protein deacetylase sirtuin-3 (334 aa).

Positions 53 to 315 constitute a Deacetylase sirtuin-type domain; it reads SSEKKFSLQD…ERLVDLLGWT (263 aa). Residue Lys-57 is modified to N6-succinyllysine. Residues 80–100 and 163–166 contribute to the NAD(+) site; these read GAGI…SGLY and QNID. The active-site Proton acceptor is the His-183. Zn(2+) is bound by residues Cys-191, Cys-194, Cys-215, and Cys-218. Residues 254–256 and 279–281 contribute to the NAD(+) site; these read GTS and NRD.

The protein belongs to the sirtuin family. Class I subfamily. As to quaternary structure, upon metabolic stress, forms a complex composed of FOXO3, SIRT3 and mitochondrial RNA polymerase POLRMT; the complex is recruited to mtDNA in a SIRT3-dependent manner. Also forms a complex composed of FOXO3, SIRT3, TFAM and POLRMT. Interacts with NDUFA9, ACSS1, IDH2 and GDH. Interacts with PCCA. Zn(2+) is required as a cofactor. As to expression, expressed in cardiomyocytes (at protein level). Expressed in the brain, liver, kidney and testes. Expressed in skeletal muscles (at protein level).

The protein resides in the mitochondrion matrix. It localises to the cytoplasm. It catalyses the reaction N(6)-acetyl-L-lysyl-[protein] + NAD(+) + H2O = 2''-O-acetyl-ADP-D-ribose + nicotinamide + L-lysyl-[protein]. The catalysed reaction is N(6)-[(S)-lactoyl]-L-lysyl-[protein] + NAD(+) + H2O = 2''-O-(S)-lactoyl-ADP-D-ribose + nicotinamide + L-lysyl-[protein]. In terms of biological role, NAD-dependent protein deacetylase. Activates or deactivates mitochondrial target proteins by deacetylating key lysine residues. Known targets include ACSS1, IDH, GDH, PDHA1, SOD2, LCAD, SDHA, MRPL12 and the ATP synthase subunit ATP5PO. Contributes to the regulation of the cellular energy metabolism. Important for regulating tissue-specific ATP levels. In response to metabolic stress, deacetylates transcription factor FOXO3 and recruits FOXO3 and mitochondrial RNA polymerase POLRMT to mtDNA to promote mtDNA transcription. Acts as a regulator of ceramide metabolism by mediating deacetylation of ceramide synthases CERS1, CERS2 and CERS6, thereby increasing their activity and promoting mitochondrial ceramide accumulation. Regulates hepatic lipogenesis. Uses NAD(+) substrate imported by SLC25A47, triggering downstream activation of PRKAA1/AMPK-alpha signaling cascade that ultimately downregulates sterol regulatory element-binding protein (SREBP) transcriptional activities and ATP-consuming lipogenesis to restore cellular energy balance. In addition to protein deacetylase activity, also acts as a protein-lysine deacylase by mediating delactylation of proteins, such as CCNE2 and 'Lys-16' of histone H4 (H4K16la). This Mus musculus (Mouse) protein is NAD-dependent protein deacetylase sirtuin-3.